We begin with the raw amino-acid sequence, 331 residues long: Probable allantoicase (331 aa).

Belongs to the allantoicase family.

The catalysed reaction is allantoate + H2O = (S)-ureidoglycolate + urea. Its pathway is nitrogen metabolism; (S)-allantoin degradation; (S)-ureidoglycolate from allantoate (aminidohydrolase route): step 1/1. This chain is Probable allantoicase, found in Pseudomonas fluorescens (strain ATCC BAA-477 / NRRL B-23932 / Pf-5).